Here is a 245-residue protein sequence, read N- to C-terminus: Geranylgeranylglyceryl phosphate synthase (245 aa).

Residues Asp20 and Ser50 each contribute to the Mg(2+) site. Residues 169-175 (YLEAGSG), 202-203 (GG), and 224-225 (GT) contribute to the sn-glycerol 1-phosphate site.

The protein belongs to the GGGP/HepGP synthase family. Group II subfamily. It depends on Mg(2+) as a cofactor.

It is found in the cytoplasm. The catalysed reaction is sn-glycerol 1-phosphate + (2E,6E,10E)-geranylgeranyl diphosphate = sn-3-O-(geranylgeranyl)glycerol 1-phosphate + diphosphate. It functions in the pathway membrane lipid metabolism; glycerophospholipid metabolism. In terms of biological role, prenyltransferase that catalyzes the transfer of the geranylgeranyl moiety of geranylgeranyl diphosphate (GGPP) to the C3 hydroxyl of sn-glycerol-1-phosphate (G1P). This reaction is the first ether-bond-formation step in the biosynthesis of archaeal membrane lipids. The polypeptide is Geranylgeranylglyceryl phosphate synthase (Ignicoccus hospitalis (strain KIN4/I / DSM 18386 / JCM 14125)).